The primary structure comprises 116 residues: Protein SPIRAL1-like 1 (116 aa).

A compositionally biased stretch (gly residues) spans 1–12; it reads MSRGGSAGGGQS. The disordered stretch occupies residues 1–116; sequence MSRGGSAGGG…SSLGYLFGGN (116 aa). Over residues 27 to 43 the composition is skewed to pro residues; the sequence is AAKPAPAAAPAPAPAPA. The span at 44-60 shows a compositional bias: low complexity; that stretch reads PAAAVAAPAEKPSPAKA. Residues 72 to 90 show a composition bias toward polar residues; that stretch reads GSRSNNNYHRADGQNTGNF. Gly residues predominate over residues 103-116; sequence PGGGSSLGYLFGGN.

This sequence belongs to the SPIRAL1 family.

Acts in maintaining the cortical microtubules organization essential for anisotropic cell growth. This is Protein SPIRAL1-like 1 from Oryza sativa subsp. japonica (Rice).